The chain runs to 343 residues: TATA box-binding protein-like 2 (343 aa).

The interval 71 to 152 is disordered; it reads PDEVTQENKD…SDSLSLASIT (82 aa). Positions 76 to 90 are enriched in basic and acidic residues; sequence QENKDQPVISKHETE. Over residues 94–127 the composition is skewed to low complexity; that stretch reads ESQSPQSRLPSPSEQDVGLGLNSSSLSNSHSQLH. Positions 143–152 are enriched in polar residues; it reads SDSLSLASIT.

It belongs to the TBP family. Interacts with TAF3. As to expression, ubiquitously expressed in all tissues examined with highest levels in heart, lung, ovary, spleen and testes.

Its subcellular location is the cytoplasm. It is found in the nucleus. Transcription factor required in complex with TAF3 for the differentiation of myoblasts into myocytes. The complex replaces TFIID at specific promoters at an early stage in the differentiation process. The protein is TATA box-binding protein-like 2 of Homo sapiens (Human).